A 443-amino-acid polypeptide reads, in one-letter code: Glycerol-3-phosphate acyltransferase 3-like (443 aa).

The next 3 membrane-spanning stretches (helical) occupy residues 15 to 35 (WFSC…SLGI), 146 to 166 (ISLR…CILL), and 170 to 190 (ITLT…VGFL). Positions 238-243 (HTSPID) match the HXXXXD motif motif. Residues 358–378 (IMSYLLRMMTSWAIVCNVWYL) form a helical membrane-spanning segment.

This sequence belongs to the 1-acyl-sn-glycerol-3-phosphate acyltransferase family.

The protein resides in the endoplasmic reticulum membrane. It catalyses the reaction sn-glycerol 3-phosphate + an acyl-CoA = a 1-acyl-sn-glycero-3-phosphate + CoA. The enzyme catalyses a 1-acyl-sn-glycero-3-phosphate + an acyl-CoA = a 1,2-diacyl-sn-glycero-3-phosphate + CoA. It functions in the pathway glycerolipid metabolism; triacylglycerol biosynthesis. Its pathway is phospholipid metabolism; CDP-diacylglycerol biosynthesis; CDP-diacylglycerol from sn-glycerol 3-phosphate: step 1/3. Functionally, may transfer the acyl-group from acyl-coA to the sn-1 position of glycerol-3-phosphate, an essential step in glycerolipid biosynthesis. Also transfers the acyl-group from acyl-coA to the sn-2 position of 1-acyl-sn-glycerol-3-phosphate (lysophosphatidic acid, or LPA), forming 1,2-diacyl-sn-glycerol-3-phosphate (phosphatidic acid, or PA). The sequence is that of Glycerol-3-phosphate acyltransferase 3-like (agpat9l) from Danio rerio (Zebrafish).